The primary structure comprises 401 residues: Imidazolonepropionase (401 aa).

Fe(3+)-binding residues include histidine 70 and histidine 72. Positions 70 and 72 each coordinate Zn(2+). Positions 79, 142, and 175 each coordinate 4-imidazolone-5-propanoate. Tyrosine 142 provides a ligand contact to N-formimidoyl-L-glutamate. Histidine 240 lines the Fe(3+) pocket. Histidine 240 contacts Zn(2+). Glutamine 243 lines the 4-imidazolone-5-propanoate pocket. Aspartate 315 provides a ligand contact to Fe(3+). A Zn(2+)-binding site is contributed by aspartate 315. N-formimidoyl-L-glutamate contacts are provided by asparagine 317 and glycine 319. Serine 320 provides a ligand contact to 4-imidazolone-5-propanoate.

Belongs to the metallo-dependent hydrolases superfamily. HutI family. It depends on Zn(2+) as a cofactor. Fe(3+) serves as cofactor.

The protein resides in the cytoplasm. It catalyses the reaction 4-imidazolone-5-propanoate + H2O = N-formimidoyl-L-glutamate. The protein operates within amino-acid degradation; L-histidine degradation into L-glutamate; N-formimidoyl-L-glutamate from L-histidine: step 3/3. In terms of biological role, catalyzes the hydrolytic cleavage of the carbon-nitrogen bond in imidazolone-5-propanoate to yield N-formimidoyl-L-glutamate. It is the third step in the universal histidine degradation pathway. This chain is Imidazolonepropionase, found in Ruegeria pomeroyi (strain ATCC 700808 / DSM 15171 / DSS-3) (Silicibacter pomeroyi).